The chain runs to 295 residues: Ribosomal protein L11 methyltransferase (295 aa).

S-adenosyl-L-methionine contacts are provided by T150, G171, D193, and N232.

Belongs to the methyltransferase superfamily. PrmA family.

Its subcellular location is the cytoplasm. It carries out the reaction L-lysyl-[protein] + 3 S-adenosyl-L-methionine = N(6),N(6),N(6)-trimethyl-L-lysyl-[protein] + 3 S-adenosyl-L-homocysteine + 3 H(+). Methylates ribosomal protein L11. This chain is Ribosomal protein L11 methyltransferase, found in Neisseria meningitidis serogroup B (strain ATCC BAA-335 / MC58).